A 90-amino-acid chain; its full sequence is MSTAMNFGTKSFQPRPPDKGSFPLDHLGECKSFKEKFMKCLHNNNFENALCRKESKEYLECRMERKLMLQEPLEKLGFGDLTSGKSEAKK.

A compositionally biased stretch (polar residues) spans 1-12; it reads MSTAMNFGTKSF. The segment at 1–20 is disordered; that stretch reads MSTAMNFGTKSFQPRPPDKG. Position 2 is an N-acetylserine (Ser2). In terms of domain architecture, CHCH spans 27–69; sequence LGECKSFKEKFMKCLHNNNFENALCRKESKEYLECRMERKLML. 2 consecutive short sequence motifs (cx9C motif) follow at residues 30-40 and 51-61; these read CKSFKEKFMKC and CRKESKEYLEC. 2 disulfides stabilise this stretch: Cys30–Cys61 and Cys40–Cys51.

Belongs to the COX19 family. Interacts with CHCHD4/MIA40 forming transient intermolecular disulfide bridges. In terms of tissue distribution, ubiquitously expressed. Highly expressed in skeletal muscle.

It is found in the cytoplasm. It localises to the cytosol. Its subcellular location is the mitochondrion intermembrane space. The protein resides in the mitochondrion. Required for the transduction of an SCO1-dependent redox signal from the mitochondrion to ATP7A to regulate cellular copper homeostasis. May be required for the assembly of mitochondrial cytochrome c oxidase. This is Cytochrome c oxidase assembly protein COX19 (COX19) from Homo sapiens (Human).